A 328-amino-acid chain; its full sequence is L-asparaginase (328 aa).

One can recognise an Asparaginase/glutaminase domain in the interval 1-320 (MKLLVLGTGG…EEIRKIMERN (320 aa)). Thr11 functions as the Nucleophile; O-isoaspartyl threonine intermediate in the catalytic mechanism. Residues Thr11, Asp53, Ser54, Thr85, and Asp86 each contribute to the L-aspartate site. Active-site charge relay system residues include Thr85, Asp86, Lys156, and Tyr274.

This sequence belongs to the asparaginase 1 family. In terms of assembly, homodimer.

It carries out the reaction L-asparagine + H2O = L-aspartate + NH4(+). With respect to regulation, chohan et al. found that divalent metal ions and EDTA do not have any significant effect on enzyme activity, indicating that activity is independent of metal ions. In another study, Hong et al. showed that activity is enhanced by Mg(2+), significantly inhibited by Co(2+) and Ni(2+), and moderately inhibited by Ca(2+), Cu(2+) and EDTA. Unfolding studies suggest that urea cannot induce complete unfolding and inactivation of the enzyme even at a concentration 8 M. However, in the presence of 4 M guanidine hydrochloride, the enzyme structure is unfolded with complete loss of enzyme activity. Catalyzes the hydrolysis of L-asparagine into L-aspartate and ammonia. Also displays D-asparaginase activity, which is about 50% of the L-asparaginase activity. Does not exhibit glutaminase activity. The protein is L-asparaginase of Thermococcus kodakarensis (strain ATCC BAA-918 / JCM 12380 / KOD1) (Pyrococcus kodakaraensis (strain KOD1)).